A 470-amino-acid chain; its full sequence is Argininosuccinate lyase (470 aa).

It belongs to the lyase 1 family. Argininosuccinate lyase subfamily.

The protein localises to the cytoplasm. The enzyme catalyses 2-(N(omega)-L-arginino)succinate = fumarate + L-arginine. The protein operates within amino-acid biosynthesis; L-arginine biosynthesis; L-arginine from L-ornithine and carbamoyl phosphate: step 3/3. The protein is Argininosuccinate lyase of Mycobacterium sp. (strain MCS).